Consider the following 232-residue polypeptide: Large ribosomal subunit protein uL1 (232 aa).

The protein belongs to the universal ribosomal protein uL1 family. Part of the 50S ribosomal subunit.

Binds directly to 23S rRNA. The L1 stalk is quite mobile in the ribosome, and is involved in E site tRNA release. In terms of biological role, protein L1 is also a translational repressor protein, it controls the translation of the L11 operon by binding to its mRNA. The sequence is that of Large ribosomal subunit protein uL1 from Ruegeria pomeroyi (strain ATCC 700808 / DSM 15171 / DSS-3) (Silicibacter pomeroyi).